We begin with the raw amino-acid sequence, 217 residues long: Trimethylamine corrinoid protein (217 aa).

The B12-binding N-terminal domain maps to 1–92; it reads MANKEEIIAK…EMEKRKSQTK (92 aa). The region spanning 94–217 is the B12-binding domain; the sequence is LGTVAIGTIE…VAKVKAALNV (124 aa). H107 contributes to the methylcob(III)alamin binding site.

It belongs to the methylamine corrinoid protein family. Can form a complex with MttB.

It functions in the pathway one-carbon metabolism; methanogenesis from trimethylamine. In terms of biological role, acts probably as a methyl group carrier between MttB and either MtbA or MtaA. This Methanosarcina barkeri protein is Trimethylamine corrinoid protein.